The following is a 185-amino-acid chain: Ribosome-recycling factor (185 aa).

It belongs to the RRF family.

It is found in the cytoplasm. In terms of biological role, responsible for the release of ribosomes from messenger RNA at the termination of protein biosynthesis. May increase the efficiency of translation by recycling ribosomes from one round of translation to another. This chain is Ribosome-recycling factor, found in Lactococcus lactis subsp. lactis (strain IL1403) (Streptococcus lactis).